The sequence spans 548 residues: Lipase 2 (548 aa).

Residues 1-14 (MKLCLLALGAAVAA) form the signal peptide. Cysteine 74 and cysteine 111 form a disulfide bridge. Catalysis depends on serine 223, which acts as the Acyl-ester intermediate. The cysteines at positions 282 and 291 are disulfide-linked. The Charge relay system role is filled by glutamate 355. Asparagine 365 carries N-linked (GlcNAc...) asparagine glycosylation. Residue histidine 463 is the Charge relay system of the active site.

This sequence belongs to the type-B carboxylesterase/lipase family.

The catalysed reaction is a triacylglycerol + H2O = a diacylglycerol + a fatty acid + H(+). The polypeptide is Lipase 2 (LIP2) (Diutina rugosa (Yeast)).